Reading from the N-terminus, the 266-residue chain is L-aspartate dehydrogenase (266 aa).

Ala123 and Asn189 together coordinate NAD(+). The active site involves His219.

This sequence belongs to the L-aspartate dehydrogenase family.

It carries out the reaction L-aspartate + NADP(+) + H2O = oxaloacetate + NH4(+) + NADPH + H(+). The enzyme catalyses L-aspartate + NAD(+) + H2O = oxaloacetate + NH4(+) + NADH + H(+). Its pathway is cofactor biosynthesis; NAD(+) biosynthesis; iminoaspartate from L-aspartate (dehydrogenase route): step 1/1. In terms of biological role, specifically catalyzes the NAD or NADP-dependent dehydrogenation of L-aspartate to iminoaspartate. The protein is L-aspartate dehydrogenase of Cupriavidus necator (strain ATCC 17699 / DSM 428 / KCTC 22496 / NCIMB 10442 / H16 / Stanier 337) (Ralstonia eutropha).